The primary structure comprises 349 residues: Glycerol-3-phosphate dehydrogenase [NAD(+)], cytoplasmic (349 aa).

10–15 contacts NAD(+); that stretch reads GSGNWG. Substrate is bound at residue lysine 120. Alanine 153 is a binding site for NAD(+). Serine 154 bears the Phosphoserine mark. Lysine 204 functions as the Proton acceptor in the catalytic mechanism. Arginine 269 is a binding site for NAD(+). 269 to 270 lines the substrate pocket; sequence RN. Lysine 289 carries the post-translational modification N6-succinyllysine. NAD(+) is bound by residues lysine 296 and glutamine 298. Tyrosine 326 is modified (phosphotyrosine).

It belongs to the NAD-dependent glycerol-3-phosphate dehydrogenase family. In terms of assembly, homodimer.

The protein localises to the cytoplasm. The catalysed reaction is sn-glycerol 3-phosphate + NAD(+) = dihydroxyacetone phosphate + NADH + H(+). Its function is as follows. Has glycerol-3-phosphate dehydrogenase activity. In Pongo abelii (Sumatran orangutan), this protein is Glycerol-3-phosphate dehydrogenase [NAD(+)], cytoplasmic (GPD1).